A 297-amino-acid chain; its full sequence is Ubiquinone biosynthesis protein COQ4, mitochondrial (297 aa).

The transit peptide at 1-54 (MLSSARARLPISLCSFSLPFARLPNTLSRYQETWQRLPGRTHPTRSIRTTPAYE) directs the protein to the mitochondrion. Residues His178, Asp179, His182, and Glu194 each contribute to the Zn(2+) site.

This sequence belongs to the COQ4 family. In terms of assembly, component of a multi-subunit COQ enzyme complex, composed of at least COQ3, COQ4, COQ5, COQ6, COQ7 and COQ9. Zn(2+) is required as a cofactor.

It localises to the mitochondrion inner membrane. The catalysed reaction is a 4-hydroxy-3-methoxy-5-(all-trans-polyprenyl)benzoate + H(+) = a 2-methoxy-6-(all-trans-polyprenyl)phenol + CO2. The protein operates within cofactor biosynthesis; ubiquinone biosynthesis. Its function is as follows. Lyase that catalyzes the C1-decarboxylation of 4-hydroxy-3-methoxy-5-(all-trans-polyprenyl)benzoic acid into 2-methoxy-6-(all-trans-polyprenyl)phenol during ubiquinone biosynthesis. The polypeptide is Ubiquinone biosynthesis protein COQ4, mitochondrial (Laccaria bicolor (strain S238N-H82 / ATCC MYA-4686) (Bicoloured deceiver)).